The following is a 347-amino-acid chain: Malate dehydrogenase, mitochondrial (347 aa).

A mitochondrion-targeting transit peptide spans 1–27; the sequence is MKASILRSVRSAVSRSSSSNRLLSRSF. Residues 41–47 and D67 each bind NAD(+); that span reads GAAGGIG. Substrate is bound by residues R114 and R120. Residues N127 and 150 to 152 each bind NAD(+); that span reads ISN. N152 and R186 together coordinate substrate. Catalysis depends on H210, which acts as the Proton acceptor. M261 contacts NAD(+).

Belongs to the LDH/MDH superfamily. MDH type 1 family. As to quaternary structure, homodimer.

The protein localises to the mitochondrion matrix. The catalysed reaction is (S)-malate + NAD(+) = oxaloacetate + NADH + H(+). This chain is Malate dehydrogenase, mitochondrial (MMDH), found in Citrullus lanatus (Watermelon).